The sequence spans 569 residues: MRYSRLFGKTQREIPSDAETISHQLLLRSGMIAQLTAGVYSFMPLAWRSIQKIENIIRQEMNKSGCQELAMPVLQPVEIWQQSGREAPFGQTLFHLKDRKDRNLVLGPTHEEVITDLASRYIQSYRDLPQRLYQIQTKFRDEPRPRGGLIRVREFIMKDMYSFDASPEGLDESYQTMKQAYENVYRRCGLESMVIDADSGAIGGKASHEFMIVAESGEDSIIYCPKCNYAANAEKAVFKKKTLPKEPPKDLEEVATPGQKTISEVAAFLSLKPENTLKAVFYMADGKFVMAVIRGDLDINEIKLKNLLKCNDLRLAEDSEVKAAGIAAGFASPVGLKNSLTVADDSVENGSNFVAGANKDGFHLKNVNFGRDFKADKMADIALAAEGAACPFCDGTFASKRGVEVGHIFKLGTFLSERFGANFTDAEGISHPIIMGCYGMGVGRLLAAAIEQNHDEKGIIWPMPIAPYQIYICGLFLDNPAVSQAAEKIYTELEAQGVEVLFDDRELTAGVKFNDADLLGIPLRLTISPRNLDKGGVELKLRRNKESELVPLESIMERVITCIKSQSDL.

The protein belongs to the class-II aminoacyl-tRNA synthetase family. ProS type 1 subfamily. Homodimer.

The protein localises to the cytoplasm. The catalysed reaction is tRNA(Pro) + L-proline + ATP = L-prolyl-tRNA(Pro) + AMP + diphosphate. Its function is as follows. Catalyzes the attachment of proline to tRNA(Pro) in a two-step reaction: proline is first activated by ATP to form Pro-AMP and then transferred to the acceptor end of tRNA(Pro). As ProRS can inadvertently accommodate and process non-cognate amino acids such as alanine and cysteine, to avoid such errors it has two additional distinct editing activities against alanine. One activity is designated as 'pretransfer' editing and involves the tRNA(Pro)-independent hydrolysis of activated Ala-AMP. The other activity is designated 'posttransfer' editing and involves deacylation of mischarged Ala-tRNA(Pro). The misacylated Cys-tRNA(Pro) is not edited by ProRS. In Dehalococcoides mccartyi (strain ATCC BAA-2266 / KCTC 15142 / 195) (Dehalococcoides ethenogenes (strain 195)), this protein is Proline--tRNA ligase.